The following is a 74-amino-acid chain: ATP synthase subunit 9, mitochondrial (74 aa).

A run of 2 helical transmembrane segments spans residues 8-28 and 50-70; these read MGAG…GNVF and ILGF…AFLI.

It belongs to the ATPase C chain family. In terms of assembly, F-type ATPases have 2 components, CF(1) - the catalytic core - and CF(0) - the membrane proton channel. CF(1) has five subunits: alpha(3), beta(3), gamma(1), delta(1), epsilon(1). CF(0) has three main subunits: a, b and c.

The protein localises to the mitochondrion membrane. Its function is as follows. This protein is one of the chains of the nonenzymatic membrane component (F0) of mitochondrial ATPase. This Solanum lycopersicum (Tomato) protein is ATP synthase subunit 9, mitochondrial (ATP9).